The chain runs to 316 residues: MIKRDQSLATPYLQFDRTQWAALRDSVPLTLSEEEIVKLKGINEDLSLEEVAQIYLPLSRLLNFYISSNLRRQAVLEQFLGTDGQKIPYVIGIAGSVAVGKSTTARLLQALLSSWPEHRSVELITTDGFLHPNKVLNERGLMKKKGFPQSYDMHSLVKFVSEVKSGAKRVTAPVYSHLIYDVVPEGNKVIEQPDILILEGLNVLQSGMDYPHDPHRVFVSDFVDFSIYVDAPEELLQSWYINRFLKFRQGAFSNPDSYFHNYSKLPEPEAINIASQLWNEINGLNLQENILPTRERASLIMTKSANHAVENVRLRK.

An ATP-binding site is contributed by 95–102 (GSVAVGKS).

The protein belongs to the prokaryotic pantothenate kinase family.

It localises to the cytoplasm. It catalyses the reaction (R)-pantothenate + ATP = (R)-4'-phosphopantothenate + ADP + H(+). It functions in the pathway cofactor biosynthesis; coenzyme A biosynthesis; CoA from (R)-pantothenate: step 1/5. This Serratia proteamaculans (strain 568) protein is Pantothenate kinase.